The chain runs to 37 residues: Cytochrome b6-f complex subunit 5 (37 aa).

A helical membrane pass occupies residues 5–25 (LLSGIVLGLIPITLVGLFVTA).

The protein belongs to the PetG family. As to quaternary structure, the 4 large subunits of the cytochrome b6-f complex are cytochrome b6, subunit IV (17 kDa polypeptide, PetD), cytochrome f and the Rieske protein, while the 4 small subunits are PetG, PetL, PetM and PetN. The complex functions as a dimer.

The protein resides in the plastid. It is found in the chloroplast thylakoid membrane. Functionally, component of the cytochrome b6-f complex, which mediates electron transfer between photosystem II (PSII) and photosystem I (PSI), cyclic electron flow around PSI, and state transitions. PetG is required for either the stability or assembly of the cytochrome b6-f complex. The sequence is that of Cytochrome b6-f complex subunit 5 from Welwitschia mirabilis (Tree tumbo).